A 307-amino-acid polypeptide reads, in one-letter code: Acetyl-coenzyme A carboxylase carboxyl transferase subunit beta (307 aa).

In terms of domain architecture, CoA carboxyltransferase N-terminal spans 28 to 297; the sequence is LWVKCPDTGQ…TPEPGTAPEP (270 aa). Residues 286-307 form a disordered region; the sequence is RRTPEPGTAPEPTTPEPLPNAA. Over residues 292 to 307 the composition is skewed to pro residues; it reads GTAPEPTTPEPLPNAA.

It belongs to the AccD/PCCB family. In terms of assembly, acetyl-CoA carboxylase is a heterohexamer composed of biotin carboxyl carrier protein (AccB), biotin carboxylase (AccC) and two subunits each of ACCase subunit alpha (AccA) and ACCase subunit beta (AccD).

It is found in the cytoplasm. The enzyme catalyses N(6)-carboxybiotinyl-L-lysyl-[protein] + acetyl-CoA = N(6)-biotinyl-L-lysyl-[protein] + malonyl-CoA. It participates in lipid metabolism; malonyl-CoA biosynthesis; malonyl-CoA from acetyl-CoA: step 1/1. In terms of biological role, component of the acetyl coenzyme A carboxylase (ACC) complex. Biotin carboxylase (BC) catalyzes the carboxylation of biotin on its carrier protein (BCCP) and then the CO(2) group is transferred by the transcarboxylase to acetyl-CoA to form malonyl-CoA. This is Acetyl-coenzyme A carboxylase carboxyl transferase subunit beta from Methylorubrum extorquens (strain ATCC 14718 / DSM 1338 / JCM 2805 / NCIMB 9133 / AM1) (Methylobacterium extorquens).